The chain runs to 120 residues: Aspartate 1-decarboxylase (120 aa).

Catalysis depends on serine 25, which acts as the Schiff-base intermediate with substrate; via pyruvic acid. Position 25 is a pyruvic acid (Ser) (serine 25). Substrate is bound at residue threonine 57. Tyrosine 58 (proton donor) is an active-site residue. 73–75 (GAA) provides a ligand contact to substrate.

Belongs to the PanD family. As to quaternary structure, heterooctamer of four alpha and four beta subunits. Requires pyruvate as cofactor. In terms of processing, is synthesized initially as an inactive proenzyme, which is activated by self-cleavage at a specific serine bond to produce a beta-subunit with a hydroxyl group at its C-terminus and an alpha-subunit with a pyruvoyl group at its N-terminus.

The protein resides in the cytoplasm. It carries out the reaction L-aspartate + H(+) = beta-alanine + CO2. It participates in cofactor biosynthesis; (R)-pantothenate biosynthesis; beta-alanine from L-aspartate: step 1/1. Catalyzes the pyruvoyl-dependent decarboxylation of aspartate to produce beta-alanine. The chain is Aspartate 1-decarboxylase from Thermosipho africanus (strain TCF52B).